A 578-amino-acid polypeptide reads, in one-letter code: MKYVVVSGGVISGIGKGVLASSTGMLLKTLGLKVTSIKIDPYMNIDAGTMSPLEHGECFVLNDGGETDLDLGNYERYLNVTLTKDHNITTGKIYSHVIAKERKGDYLGKTVQIVPHLTNAIQEWIERVSRIPVDNTGMEPDVCIIELGGTVGDIESAPFVEALRQFQFRVGKENFALIHVSLVPVIHGEQKTKPTQAAIKDLRSLGLVPDMIACRCSETLEKGVIEKIAMFCHVGADQVVNVHDVNSTYHVPLLLLEQKMINYLHQRLQLQEITLSSEDIQRGENLLSKWKSMTGNFDSSMETVKIALVGKYTNLKDSYLSVIKALEHSSMKCRRKLEIMWVEATDLEPETQDTEKAKFHEAWNKVSTADGILVPGGFGSRGTEGMMLASRWARENHIPFLGVCLGLQIATIEFARNVLGVKEGNSAEFFPELDESNQVVVFMPEIDKETMGGSMRLGLRPTYFQQGTEWCAIKKLYGSAESVEERHRHRYEINPNFIERLEEHGLMFVGRDETNKRCEIFEMKDHPFFVATQYHPEYTSKVLDPSKPFLGLVAASSGILDDVIAGKYEFNGDGKSDF.

Positions 305-559 (KIALVGKYTN…LGLVAASSGI (255 aa)) constitute a Glutamine amidotransferase type-1 domain. Residues Cys404, His535, and Glu537 each act as for GATase activity in the active site.

It belongs to the CTP synthase family.

The catalysed reaction is UTP + L-glutamine + ATP + H2O = CTP + L-glutamate + ADP + phosphate + 2 H(+). Its pathway is pyrimidine metabolism; CTP biosynthesis via de novo pathway; CTP from UDP: step 2/2. Its function is as follows. Catalyzes the ATP-dependent amination of UTP to CTP with either L-glutamine or ammonia as the source of nitrogen. The polypeptide is CTP synthase (URA7) (Candida glabrata (strain ATCC 2001 / BCRC 20586 / JCM 3761 / NBRC 0622 / NRRL Y-65 / CBS 138) (Yeast)).